The sequence spans 433 residues: tRNA-2-methylthio-N(6)-dimethylallyladenosine synthase (433 aa).

Residues 4-119 (KKLFIQTLGC…ITQAIKTPKF (116 aa)) enclose the MTTase N-terminal domain. Residues cysteine 13, cysteine 50, cysteine 82, cysteine 151, cysteine 155, and cysteine 158 each coordinate [4Fe-4S] cluster. The 234-residue stretch at 137–370 (RNSIYKSYIN…QNRHSEILDE (234 aa)) folds into the Radical SAM core domain. Positions 373-433 (KKQENKTFKV…KRMVLYGEIV (61 aa)) constitute a TRAM domain.

The protein belongs to the methylthiotransferase family. MiaB subfamily. As to quaternary structure, monomer. Requires [4Fe-4S] cluster as cofactor.

It is found in the cytoplasm. The enzyme catalyses N(6)-dimethylallyladenosine(37) in tRNA + (sulfur carrier)-SH + AH2 + 2 S-adenosyl-L-methionine = 2-methylsulfanyl-N(6)-dimethylallyladenosine(37) in tRNA + (sulfur carrier)-H + 5'-deoxyadenosine + L-methionine + A + S-adenosyl-L-homocysteine + 2 H(+). Its function is as follows. Catalyzes the methylthiolation of N6-(dimethylallyl)adenosine (i(6)A), leading to the formation of 2-methylthio-N6-(dimethylallyl)adenosine (ms(2)i(6)A) at position 37 in tRNAs that read codons beginning with uridine. This Campylobacter jejuni (strain RM1221) protein is tRNA-2-methylthio-N(6)-dimethylallyladenosine synthase.